Here is a 492-residue protein sequence, read N- to C-terminus: N-succinylglutamate 5-semialdehyde dehydrogenase (492 aa).

225–230 (GSSNTG) contributes to the NAD(+) binding site. Active-site residues include Glu248 and Cys282.

It belongs to the aldehyde dehydrogenase family. AstD subfamily.

The catalysed reaction is N-succinyl-L-glutamate 5-semialdehyde + NAD(+) + H2O = N-succinyl-L-glutamate + NADH + 2 H(+). It participates in amino-acid degradation; L-arginine degradation via AST pathway; L-glutamate and succinate from L-arginine: step 4/5. Functionally, catalyzes the NAD-dependent reduction of succinylglutamate semialdehyde into succinylglutamate. In Colwellia psychrerythraea (strain 34H / ATCC BAA-681) (Vibrio psychroerythus), this protein is N-succinylglutamate 5-semialdehyde dehydrogenase.